The sequence spans 223 residues: Twisted gastrulation protein homolog 1 (223 aa).

The first 25 residues, 1-25 (MKLHYVAVLTLAILMFLTWLPESLS), serve as a signal peptide directing secretion. Asparagine 52 and asparagine 81 each carry an N-linked (GlcNAc...) asparagine glycan.

Belongs to the twisted gastrulation protein family. In terms of assembly, interacts with CHRD and BMP4. This interaction enhances CHRD/BMP4 complex formation. Interacts with BMP7.

It localises to the secreted. In terms of biological role, may be involved in dorsoventral axis formation. Seems to antagonize BMP signaling by forming ternary complexes with CHRD and BMPs, thereby preventing BMPs from binding to their receptors. In addition to the anti-BMP function, also has pro-BMP activity, partly mediated by cleavage and degradation of CHRD, which releases BMPs from ternary complexes. May be an important modulator of BMP-regulated cartilage development and chondrocyte differentiation. May play a role in thymocyte development. This is Twisted gastrulation protein homolog 1 (TWSG1) from Homo sapiens (Human).